An 82-amino-acid polypeptide reads, in one-letter code: Polyferredoxin protein FwdG (82 aa).

2 4Fe-4S ferredoxin-type domains span residues 4–33 (YELVVYPERCHGCGNCVVSCPVNAKHPETW) and 51–80 (VVTVVNQDLCGGCGACIEACPVNAIELVFK). [4Fe-4S] cluster contacts are provided by Cys13, Cys16, Cys19, Cys23, Cys60, Cys63, Cys66, and Cys70.

[4Fe-4S] cluster is required as a cofactor.

The protein is Polyferredoxin protein FwdG (fwdG) of Methanocaldococcus jannaschii (strain ATCC 43067 / DSM 2661 / JAL-1 / JCM 10045 / NBRC 100440) (Methanococcus jannaschii).